A 275-amino-acid polypeptide reads, in one-letter code: Phosphonoacetaldehyde hydrolase (275 aa).

The Nucleophile role is filled by Asp15. Positions 15 and 17 each coordinate Mg(2+). Lys56 acts as the Schiff-base intermediate with substrate in catalysis. Asp189 is a Mg(2+) binding site.

It belongs to the HAD-like hydrolase superfamily. PhnX family. In terms of assembly, homodimer. The cofactor is Mg(2+).

It carries out the reaction phosphonoacetaldehyde + H2O = acetaldehyde + phosphate + H(+). In terms of biological role, involved in phosphonate degradation. The protein is Phosphonoacetaldehyde hydrolase of Pseudomonas putida (strain W619).